We begin with the raw amino-acid sequence, 161 residues long: Cytochrome c-type biogenesis protein CcmE (161 aa).

Topologically, residues 1–8 (MNPRRKKR) are cytoplasmic. A helical; Signal-anchor for type II membrane protein membrane pass occupies residues 9–29 (LGLILALFVGISATVGLMLYA). Residues 30–161 (LNQNMDLFYT…TEQQKQGTGQ (132 aa)) lie on the Periplasmic side of the membrane. The heme site is built by H129 and Y133. The disordered stretch occupies residues 142–161 (MKKTHEPLQYTEQQKQGTGQ). Polar residues predominate over residues 151–161 (YTEQQKQGTGQ).

The protein belongs to the CcmE/CycJ family.

Its subcellular location is the cell inner membrane. Its function is as follows. Heme chaperone required for the biogenesis of c-type cytochromes. Transiently binds heme delivered by CcmC and transfers the heme to apo-cytochromes in a process facilitated by CcmF and CcmH. This chain is Cytochrome c-type biogenesis protein CcmE, found in Aliivibrio fischeri (strain ATCC 700601 / ES114) (Vibrio fischeri).